Here is a 200-residue protein sequence, read N- to C-terminus: UPF0301 protein BruAb1_0502 (200 aa).

This sequence belongs to the UPF0301 (AlgH) family.

The sequence is that of UPF0301 protein BruAb1_0502 from Brucella abortus biovar 1 (strain 9-941).